Here is a 1004-residue protein sequence, read N- to C-terminus: 2-oxoglutarate dehydrogenase E1 component (1004 aa).

It belongs to the alpha-ketoglutarate dehydrogenase family. As to quaternary structure, homodimer. Part of the 2-oxoglutarate dehydrogenase (OGDH) complex composed of E1 (2-oxoglutarate dehydrogenase), E2 (dihydrolipoamide succinyltransferase) and E3 (dihydrolipoamide dehydrogenase); the complex contains multiple copies of the three enzymatic components (E1, E2 and E3). It depends on thiamine diphosphate as a cofactor.

It catalyses the reaction N(6)-[(R)-lipoyl]-L-lysyl-[protein] + 2-oxoglutarate + H(+) = N(6)-[(R)-S(8)-succinyldihydrolipoyl]-L-lysyl-[protein] + CO2. Functionally, E1 component of the 2-oxoglutarate dehydrogenase (OGDH) complex which catalyzes the decarboxylation of 2-oxoglutarate, the first step in the conversion of 2-oxoglutarate to succinyl-CoA and CO(2). The chain is 2-oxoglutarate dehydrogenase E1 component from Brucella canis (strain ATCC 23365 / NCTC 10854 / RM-666).